Consider the following 228-residue polypeptide: L-ribulose-5-phosphate 4-epimerase UlaF (228 aa).

Residues 26 to 27 (GN), 43 to 44 (SG), and 72 to 73 (SS) contribute to the substrate site. Zn(2+) contacts are provided by Asp-74, His-93, and His-95. Asp-118 serves as the catalytic Proton donor/acceptor. His-167 lines the Zn(2+) pocket. Tyr-225 (proton donor/acceptor) is an active-site residue.

It belongs to the aldolase class II family. AraD/FucA subfamily. Requires Zn(2+) as cofactor.

It carries out the reaction L-ribulose 5-phosphate = D-xylulose 5-phosphate. The protein operates within cofactor degradation; L-ascorbate degradation; D-xylulose 5-phosphate from L-ascorbate: step 4/4. In terms of biological role, catalyzes the isomerization of L-ribulose 5-phosphate to D-xylulose 5-phosphate. Is involved in the anaerobic L-ascorbate utilization. The polypeptide is L-ribulose-5-phosphate 4-epimerase UlaF (Escherichia coli O45:K1 (strain S88 / ExPEC)).